The following is a 519-amino-acid chain: Cilia- and flagella-associated protein 53 (519 aa).

2 coiled-coil regions span residues 80–107 and 210–339; these read NRHL…LLES and LAKE…QEEQ. The tract at residues 498-519 is disordered; it reads TTAVHPFRRRDRRCSSSGGQMS.

Belongs to the CFAP53 family.

It localises to the cytoplasm. Its subcellular location is the cytoskeleton. The protein localises to the cilium axoneme. It is found in the cilium basal body. Functionally, microtubule inner protein (MIP) part of the dynein-decorated doublet microtubules (DMTs) in cilia axoneme, which is required for motile cilia beating. Regulates motility patterns of both 9+0 and 9+2 motile cilia through differential localization and recruitment of axonemal dynein components. Required for cilium motility within the spinal canal and Kuppfer's vesicle and is involved in the establishment of left-right symmetry during embryogenesis. This Danio rerio (Zebrafish) protein is Cilia- and flagella-associated protein 53.